A 240-amino-acid polypeptide reads, in one-letter code: MATLFIADLHLQTEEPAITAGFLHFLQGEARSADALYILGDLFEAWIGDDDPNPLHHDMAAAIKALVDSGVPCYFIHGNRDFLIGKRFARESGMTLLPDENVLELYGRNVLIMHGDTLCTDDTGYLAFRAKVHTPWIQTLFLALPLFIRNRIAAKMRAGSKAANSSKSMTIMDVNPQAVVEVMEKHRVQWLIHGHTHRPDVHQLTANGEPAHRVVLGAWHSEGSMVKVTSEGVELIQFPF.

Mn(2+)-binding residues include D8, H10, D41, N79, and H114. N79 to R80 serves as a coordination point for substrate. 5 residues coordinate substrate: D122, S160, N164, K167, and H195. Positions 195 and 197 each coordinate Mn(2+).

The protein belongs to the LpxH family. The cofactor is Mn(2+).

The protein localises to the cell inner membrane. The catalysed reaction is UDP-2-N,3-O-bis[(3R)-3-hydroxytetradecanoyl]-alpha-D-glucosamine + H2O = 2-N,3-O-bis[(3R)-3-hydroxytetradecanoyl]-alpha-D-glucosaminyl 1-phosphate + UMP + 2 H(+). It functions in the pathway glycolipid biosynthesis; lipid IV(A) biosynthesis; lipid IV(A) from (3R)-3-hydroxytetradecanoyl-[acyl-carrier-protein] and UDP-N-acetyl-alpha-D-glucosamine: step 4/6. In terms of biological role, hydrolyzes the pyrophosphate bond of UDP-2,3-diacylglucosamine to yield 2,3-diacylglucosamine 1-phosphate (lipid X) and UMP by catalyzing the attack of water at the alpha-P atom. Involved in the biosynthesis of lipid A, a phosphorylated glycolipid that anchors the lipopolysaccharide to the outer membrane of the cell. The sequence is that of UDP-2,3-diacylglucosamine hydrolase from Enterobacter sp. (strain 638).